Here is a 605-residue protein sequence, read N- to C-terminus: IQ domain-containing protein IQM2 (605 aa).

The IQ domain occupies Lys105–Gln134. The interval Gln408–Val505 is disordered. A compositionally biased stretch (basic and acidic residues) spans Ser425 to Glu440. Over residues Asp462–Gln480 the composition is skewed to acidic residues. Residues Glu481–Pro490 show a composition bias toward low complexity. Residues Arg491–Val505 show a composition bias toward basic and acidic residues.

In terms of tissue distribution, expressed in rosette and cauline leaves, stems, flowers and siliques, and at lower levels in roots.

The protein localises to the cytoplasm. Its subcellular location is the nucleus. Functionally, may be involved in biotic and abiotic stress responses. The polypeptide is IQ domain-containing protein IQM2 (Arabidopsis thaliana (Mouse-ear cress)).